Here is a 316-residue protein sequence, read N- to C-terminus: Type II restriction enzyme BsuBI (316 aa).

This sequence belongs to the BsuBI/PstI type II restriction endonuclease family. Homodimer. Mg(2+) is required as a cofactor.

It catalyses the reaction Endonucleolytic cleavage of DNA to give specific double-stranded fragments with terminal 5'-phosphates.. Its function is as follows. A P subtype restriction enzyme that recognizes the double-stranded sequence 5'-CTGCAG-3' and cleaves after A-5. This Bacillus subtilis protein is Type II restriction enzyme BsuBI (hsdBR).